The sequence spans 180 residues: Large ribosomal subunit protein uL5 (180 aa).

This sequence belongs to the universal ribosomal protein uL5 family. Part of the 50S ribosomal subunit; part of the 5S rRNA/L5/L18/L25 subcomplex. Contacts the 5S rRNA and the P site tRNA. Forms a bridge to the 30S subunit in the 70S ribosome.

In terms of biological role, this is one of the proteins that bind and probably mediate the attachment of the 5S RNA into the large ribosomal subunit, where it forms part of the central protuberance. In the 70S ribosome it contacts protein S13 of the 30S subunit (bridge B1b), connecting the 2 subunits; this bridge is implicated in subunit movement. Contacts the P site tRNA; the 5S rRNA and some of its associated proteins might help stabilize positioning of ribosome-bound tRNAs. This is Large ribosomal subunit protein uL5 from Chloroflexus aurantiacus (strain ATCC 29364 / DSM 637 / Y-400-fl).